Consider the following 282-residue polypeptide: Keratin-associated protein 10-1 (282 aa).

Tandem repeats lie at residues 26-30 (CCEPH), 31-35 (CCALS), 36-40 (CCAPA), 57-61 (CCQAA), 79-83 (CCQQS), 89-93 (CCTSS), 99-103 (CCVPV), 104-108 (CCKPV), 109-113 (CCLPT), 121-125 (CCQQS), 131-135 (CCASS), 141-145 (CCVPV), 146-150 (CCKPV), 163-167 (CCQQS), 173-177 (CCTSS), 183-187 (CCVPV), 193-197 (CCKPI), 198-202 (CCVPV), 210-214 (CCQQS), 220-224 (CCTTS), 225-229 (CCRPS), 244-248 (CCMPV), 251-255 (CCAPA), and 262-266 (CCRPA). A 24 X 5 AA repeats of C-C-X(3) region spans residues 26-266 (CCEPHCCALS…SCQASCCRPA (241 aa)).

The protein belongs to the KRTAP type 10 family. Interacts with hair keratins. In terms of tissue distribution, restricted to a narrow region of the hair fiber cuticle, lying approximately 20 cell layers above the apex of the dermal papilla of the hair root; not detected in any other tissues.

Its function is as follows. In the hair cortex, hair keratin intermediate filaments are embedded in an interfilamentous matrix, consisting of hair keratin-associated proteins (KRTAP), which are essential for the formation of a rigid and resistant hair shaft through their extensive disulfide bond cross-linking with abundant cysteine residues of hair keratins. The matrix proteins include the high-sulfur and high-glycine-tyrosine keratins. This is Keratin-associated protein 10-1 (KRTAP10-1) from Homo sapiens (Human).